A 466-amino-acid polypeptide reads, in one-letter code: CBL-interacting protein kinase 20 (466 aa).

Residues 12–276 enclose the Protein kinase domain; it reads YELGRSLGHG…IDELVKHPWF (265 aa). ATP is bound by residues 18 to 26 and K41; that span reads LGHGTFSKV. D139 (proton acceptor) is an active-site residue. An activation loop region spans residues 162–191; it reads DFGLSALSASRRHDGLLHTTCGTPSYVAPE. An NAF domain is found at 297-329; it reads KPANAAMNMKPASLNAFDIISLSQGFDLSGMFC. Residues 337–366 are PPI; sequence TQDQLFVTGKPATAIVSRLEEIAETEHFTV. The tract at residues 446 to 466 is disordered; it reads ASEKNQLPAVSEVSPLSSPRN.

This sequence belongs to the protein kinase superfamily. CAMK Ser/Thr protein kinase family. SNF1 subfamily. Requires Mn(2+) as cofactor.

The enzyme catalyses L-seryl-[protein] + ATP = O-phospho-L-seryl-[protein] + ADP + H(+). The catalysed reaction is L-threonyl-[protein] + ATP = O-phospho-L-threonyl-[protein] + ADP + H(+). Its function is as follows. CIPK serine-threonine protein kinases interact with CBL proteins. Binding of a CBL protein to the regulatory NAF domain of CIPK protein lead to the activation of the kinase in a calcium-dependent manner. This chain is CBL-interacting protein kinase 20 (CIPK20), found in Oryza sativa subsp. japonica (Rice).